Consider the following 106-residue polypeptide: Iron-sulfur cluster assembly protein CyaY (106 aa).

Belongs to the frataxin family.

In terms of biological role, involved in iron-sulfur (Fe-S) cluster assembly. May act as a regulator of Fe-S biogenesis. This Escherichia coli O9:H4 (strain HS) protein is Iron-sulfur cluster assembly protein CyaY.